Reading from the N-terminus, the 233-residue chain is Large ribosomal subunit protein uL1 (233 aa).

This sequence belongs to the universal ribosomal protein uL1 family. As to quaternary structure, part of the 50S ribosomal subunit.

Functionally, binds directly to 23S rRNA. The L1 stalk is quite mobile in the ribosome, and is involved in E site tRNA release. In terms of biological role, protein L1 is also a translational repressor protein, it controls the translation of the L11 operon by binding to its mRNA. The chain is Large ribosomal subunit protein uL1 from Vibrio parahaemolyticus serotype O3:K6 (strain RIMD 2210633).